Reading from the N-terminus, the 254-residue chain is Small ribosomal subunit protein uS5 (254 aa).

A compositionally biased stretch (polar residues) spans 1-10; it reads MSAPEAQQQK. Residues 1–34 form a disordered region; sequence MSAPEAQQQKRGGFGGRNRGRPNRRGPRNTEEKG. Ser-2 is subject to N-acetylserine. The residue at position 11 (Arg-11) is an Asymmetric dimethylarginine; by HMT1; alternate. At Arg-11 the chain carries Omega-N-methylarginine; by HMT1; alternate. At Arg-17 the chain carries Omega-N-methylarginine; by HMT1. Over residues 18–27 the composition is skewed to basic residues; sequence NRGRPNRRGP. A Glycyl lysine isopeptide (Lys-Gly) (interchain with G-Cter in ubiquitin) cross-link involves residue Lys-33. An S5 DRBM domain is found at 76 to 139; that stretch reads LQDEVMNIKP…IIAKLSVIPI (64 aa).

It belongs to the universal ribosomal protein uS5 family. In terms of assembly, component of the small ribosomal subunit (SSU). Mature yeast ribosomes consist of a small (40S) and a large (60S) subunit. The 40S small subunit contains 1 molecule of ribosomal RNA (18S rRNA) and 33 different proteins (encoded by 57 genes). The large 60S subunit contains 3 rRNA molecules (25S, 5.8S and 5S rRNA) and 46 different proteins (encoded by 81 genes). Interacts with snoRNA U3. Interacts with MPP10. Component of the ribosomal small subunit (SSU) processome composed of at least 40 protein subunits and snoRNA U3. N-terminally acetylated by acetyltransferase NatA.

The protein resides in the cytoplasm. It localises to the nucleus. It is found in the nucleolus. Component of the ribosome, a large ribonucleoprotein complex responsible for the synthesis of proteins in the cell. The small ribosomal subunit (SSU) binds messenger RNAs (mRNAs) and translates the encoded message by selecting cognate aminoacyl-transfer RNA (tRNA) molecules. The large subunit (LSU) contains the ribosomal catalytic site termed the peptidyl transferase center (PTC), which catalyzes the formation of peptide bonds, thereby polymerizing the amino acids delivered by tRNAs into a polypeptide chain. The nascent polypeptides leave the ribosome through a tunnel in the LSU and interact with protein factors that function in enzymatic processing, targeting, and the membrane insertion of nascent chains at the exit of the ribosomal tunnel. uS5 is important for the assembly and function of the 40S ribosomal subunit. Mutations in this protein affects the control of translational fidelity. Involved in nucleolar processing of pre-18S ribosomal RNA and ribosome assembly. The sequence is that of Small ribosomal subunit protein uS5 from Saccharomyces cerevisiae (strain ATCC 204508 / S288c) (Baker's yeast).